Consider the following 368-residue polypeptide: DNA replication and repair protein RecF (368 aa).

Position 30-37 (30-37) interacts with ATP; it reads GNNAQGKT.

This sequence belongs to the RecF family.

It localises to the cytoplasm. In terms of biological role, the RecF protein is involved in DNA metabolism; it is required for DNA replication and normal SOS inducibility. RecF binds preferentially to single-stranded, linear DNA. It also seems to bind ATP. The sequence is that of DNA replication and repair protein RecF from Streptococcus pyogenes serotype M6 (strain ATCC BAA-946 / MGAS10394).